We begin with the raw amino-acid sequence, 961 residues long: FYVE, RhoGEF and PH domain-containing protein 1 (961 aa).

Gly residues predominate over residues 1–11; sequence MHGHRAPGGAG. The tract at residues 1-353 is disordered; it reads MHGHRAPGGA…DEEEEEEKDR (353 aa). Low complexity predominate over residues 27–38; the sequence is PPACADSDPGAS. Ser-48 bears the Phosphoserine mark. A compositionally biased stretch (basic and acidic residues) spans 125-135; that stretch reads PHPEGPQRLRS. Pro residues-rich tracts occupy residues 156 to 165 and 172 to 190; these read GPKPQVPPKP and RMPPPLEPIPPPPSRPLPA. Positions 171–187 match the SH3-binding motif; sequence PRMPPPLEPIPPPPSRP. Residues 199–213 are compositionally biased toward low complexity; the sequence is APRAEASPSSAAVSS. Ser-205 carries the post-translational modification Phosphoserine. The span at 231-255 shows a compositional bias: pro residues; it reads VPGPSPGPPEPVMLPQPTSQPPVPQ. The span at 273-284 shows a compositional bias: basic and acidic residues; sequence RDGEKVPNRDSG. Composition is skewed to low complexity over residues 285–294 and 316–325; these read IDSISSPSNS and ALASVPVALA. The span at 335–351 shows a compositional bias: acidic residues; the sequence is VDSDLEEEDDEEEEEEK. In terms of domain architecture, DH spans 373–561; sequence KVFHIANELL…ATAAEHSNAA (189 aa). The PH 1 domain maps to 590–689; the sequence is ELIKEGHILK…WVQAINSTLL (100 aa). Residues 702–726 are disordered; that stretch reads NSTNREDEDTPPNSPNVDLGKRAPT. Thr-711 carries the phosphothreonine modification. Ser-715 bears the Phosphoserine mark. The FYVE-type zinc-finger motif lies at 730–790; it reads EKEVTMCMRC…VCTDCYVALH (61 aa). Zn(2+) contacts are provided by Cys-736, Cys-739, Cys-753, Cys-756, Cys-761, Cys-764, Cys-782, and Cys-785. The PH 2 domain occupies 821–921; that stretch reads NSVICSFLHY…WMAVLGRAGR (101 aa). The disordered stretch occupies residues 925–961; sequence FCPGPTLSEDREMEEAPVAALGATAEPPESPQTRDKT.

Interacts with DBNL/ABP1 and CTTN. May interact with CCPG1. Binds CDC42. As to expression, expressed in fetal heart, brain, lung, kidney and placenta. Less expressed in liver; adult heart, brain, lung, pancreas and skeletal muscle.

The protein resides in the cytoplasm. Its subcellular location is the cell projection. The protein localises to the lamellipodium. It localises to the ruffle. It is found in the cytoskeleton. Its function is as follows. Activates CDC42, a member of the Ras-like family of Rho- and Rac proteins, by exchanging bound GDP for free GTP. Plays a role in regulating the actin cytoskeleton and cell shape. The protein is FYVE, RhoGEF and PH domain-containing protein 1 (FGD1) of Homo sapiens (Human).